The primary structure comprises 946 residues: Inter-alpha-trypsin inhibitor heavy chain H2 (946 aa).

Positions 1 to 18 are cleaved as a signal peptide; the sequence is MQRLACVLIWLFLLEEQA. Positions 19–54 are excised as a propeptide; the sequence is FEIPANEYSEFAGYSNLVELAPDKFPFVQENRRYQR. The VIT domain occupies 56–185; sequence LPEESGEMTD…KVQFELHYQE (130 aa). Residue serine 60 is modified to Phosphoserine. N-linked (GlcNAc...) asparagine glycosylation is found at asparagine 118 and asparagine 263. Residues glutamate 282 and glutamate 283 each carry the 4-carboxyglutamate modification. In terms of domain architecture, VWFA spans 308–468; the sequence is PKNILFVIDV…YDFLKRLSNE (161 aa). An N-linked (GlcNAc...) asparagine glycan is attached at asparagine 445. Serine 466 carries the phosphoserine modification. N-linked (GlcNAc...) asparagine glycosylation occurs at asparagine 578. The residue at position 702 (aspartate 702) is an Aspartate 1-(chondroitin 4-sulfate)-ester. The propeptide occupies 703–946; that stretch reads PHFIIYLPKS…PQLYSFLKRP (244 aa). At serine 886 the chain carries Phosphoserine.

Belongs to the ITIH family. In terms of assembly, I-alpha-I plasma protease inhibitors are assembled from one or two heavy chains (HC) and one light chain, bikunin. Inter-alpha-inhibitor (I-alpha-I) is composed of ITIH1/HC1, ITIH2/HC2 and bikunin. In terms of processing, heavy chains are linked to bikunin via chondroitin 4-sulfate esterified to the alpha-carboxyl of the C-terminal aspartate after propeptide cleavage. Post-translationally, phosphorylated by FAM20C in the extracellular medium.

The protein localises to the secreted. Functionally, may act as a carrier of hyaluronan in serum or as a binding protein between hyaluronan and other matrix protein, including those on cell surfaces in tissues to regulate the localization, synthesis and degradation of hyaluronan which are essential to cells undergoing biological processes. The chain is Inter-alpha-trypsin inhibitor heavy chain H2 (ITIH2) from Mesocricetus auratus (Golden hamster).